We begin with the raw amino-acid sequence, 288 residues long: ATP synthase gamma chain (288 aa).

Belongs to the ATPase gamma chain family. F-type ATPases have 2 components, CF(1) - the catalytic core - and CF(0) - the membrane proton channel. CF(1) has five subunits: alpha(3), beta(3), gamma(1), delta(1), epsilon(1). CF(0) has three main subunits: a, b and c.

The protein localises to the cell inner membrane. Its function is as follows. Produces ATP from ADP in the presence of a proton gradient across the membrane. The gamma chain is believed to be important in regulating ATPase activity and the flow of protons through the CF(0) complex. In Polaromonas sp. (strain JS666 / ATCC BAA-500), this protein is ATP synthase gamma chain.